Consider the following 256-residue polypeptide: Lysine-rich coiled-coil protein 1 (256 aa).

2 disordered regions span residues 62 to 84 (RLPSGTNHSYPRSCSSSQTEDRV) and 144 to 256 (TIDP…ILGF). Over residues 64-79 (PSGTNHSYPRSCSSSQ) the composition is skewed to polar residues. Composition is skewed to basic and acidic residues over residues 161–188 (HVEEGREKQEERPKHERKRSSEEMDLNK) and 218–227 (KTRDVSSKKE). The stretch at 209 to 247 (EKLKNRKEKKTRDVSSKKEDRKRRKEKKEQGEERTEEEM) forms a coiled coil.

This chain is Lysine-rich coiled-coil protein 1 (Krcc1), found in Mus musculus (Mouse).